Consider the following 219-residue polypeptide: Redox-sensing transcriptional repressor Rex (219 aa).

A DNA-binding region (H-T-H motif) is located at residues 17 to 56; the sequence is RYLRYVEDLLNHDIMRISSSELSQRMGYTASQVRQDFNNF. 91 to 96 lines the NAD(+) pocket; the sequence is GVGNLG.

This sequence belongs to the transcriptional regulatory Rex family. Homodimer.

It localises to the cytoplasm. Modulates transcription in response to changes in cellular NADH/NAD(+) redox state. This chain is Redox-sensing transcriptional repressor Rex, found in Caldicellulosiruptor saccharolyticus (strain ATCC 43494 / DSM 8903 / Tp8T 6331).